Here is a 252-residue protein sequence, read N- to C-terminus: 3-dehydroquinate dehydratase (252 aa).

Residues serine 21, 46–48 (EWR), and arginine 82 contribute to the 3-dehydroquinate site. Histidine 143 (proton donor/acceptor) is an active-site residue. The Schiff-base intermediate with substrate role is filled by lysine 170. Arginine 213, serine 232, and glutamine 236 together coordinate 3-dehydroquinate.

Belongs to the type-I 3-dehydroquinase family. In terms of assembly, homodimer.

The catalysed reaction is 3-dehydroquinate = 3-dehydroshikimate + H2O. Its pathway is metabolic intermediate biosynthesis; chorismate biosynthesis; chorismate from D-erythrose 4-phosphate and phosphoenolpyruvate: step 3/7. Its function is as follows. Involved in the third step of the chorismate pathway, which leads to the biosynthesis of aromatic amino acids. Catalyzes the cis-dehydration of 3-dehydroquinate (DHQ) and introduces the first double bond of the aromatic ring to yield 3-dehydroshikimate. This chain is 3-dehydroquinate dehydratase, found in Escherichia coli O127:H6 (strain E2348/69 / EPEC).